The sequence spans 452 residues: Probable 1,4-beta-D-glucan cellobiohydrolase A (452 aa).

The signal sequence occupies residues 1 to 17; it reads MHQRALLFSALAVAANA. Asn81 carries N-linked (GlcNAc...) asparagine glycosylation. Glu226 acts as the Nucleophile in catalysis. Residue Glu231 is the Proton donor of the active site. Asn284 carries N-linked (GlcNAc...) asparagine glycosylation. Positions 405–431 are disordered; that stretch reads ADPSKPGVARGTCEHGAGDPENVESQH.

It belongs to the glycosyl hydrolase 7 (cellulase C) family.

Its subcellular location is the secreted. It catalyses the reaction Hydrolysis of (1-&gt;4)-beta-D-glucosidic linkages in cellulose and cellotetraose, releasing cellobiose from the non-reducing ends of the chains.. Its function is as follows. The biological conversion of cellulose to glucose generally requires three types of hydrolytic enzymes: (1) Endoglucanases which cut internal beta-1,4-glucosidic bonds; (2) Exocellobiohydrolases that cut the disaccharide cellobiose from the non-reducing end of the cellulose polymer chain; (3) Beta-1,4-glucosidases which hydrolyze the cellobiose and other short cello-oligosaccharides to glucose. The sequence is that of Probable 1,4-beta-D-glucan cellobiohydrolase A (cbhA) from Aspergillus fumigatus (strain CBS 144.89 / FGSC A1163 / CEA10) (Neosartorya fumigata).